The following is a 302-amino-acid chain: HPr kinase/phosphorylase (302 aa).

Active-site residues include His136 and Lys157. Position 151-158 (151-158 (GESGIGKS)) interacts with ATP. Ser158 provides a ligand contact to Mg(2+). Asp175 (proton acceptor; for phosphorylation activity. Proton donor; for dephosphorylation activity) is an active-site residue. The interval 198-207 (LEVRGLGIID) is important for the catalytic mechanism of both phosphorylation and dephosphorylation. Residue Glu199 participates in Mg(2+) binding. The active site involves Arg240. An important for the catalytic mechanism of dephosphorylation region spans residues 261-266 (PIRPGR).

This sequence belongs to the HPrK/P family. As to quaternary structure, homohexamer. Mg(2+) serves as cofactor.

The catalysed reaction is [HPr protein]-L-serine + ATP = [HPr protein]-O-phospho-L-serine + ADP + H(+). The enzyme catalyses [HPr protein]-O-phospho-L-serine + phosphate + H(+) = [HPr protein]-L-serine + diphosphate. Functionally, catalyzes the ATP- as well as the pyrophosphate-dependent phosphorylation of a specific serine residue in HPr, a phosphocarrier protein of the phosphoenolpyruvate-dependent sugar phosphotransferase system (PTS). HprK/P also catalyzes the pyrophosphate-producing, inorganic phosphate-dependent dephosphorylation (phosphorolysis) of seryl-phosphorylated HPr (P-Ser-HPr). The two antagonistic activities of HprK/P are regulated by several intracellular metabolites, which change their concentration in response to the absence or presence of rapidly metabolisable carbon sources (glucose, fructose, etc.) in the growth medium. Therefore, by controlling the phosphorylation state of HPr, HPrK/P is a sensor enzyme that plays a major role in the regulation of carbon metabolism and sugar transport: it mediates carbon catabolite repression (CCR), and regulates PTS-catalyzed carbohydrate uptake and inducer exclusion. This Clostridium beijerinckii (strain ATCC 51743 / NCIMB 8052) (Clostridium acetobutylicum) protein is HPr kinase/phosphorylase.